The sequence spans 197 residues: ATP-dependent Clp protease proteolytic subunit 2 (197 aa).

Residue S96 is the Nucleophile of the active site. Residue H121 is part of the active site.

Belongs to the peptidase S14 family. As to quaternary structure, fourteen ClpP subunits assemble into 2 heptameric rings which stack back to back to give a disk-like structure with a central cavity, resembling the structure of eukaryotic proteasomes.

The protein localises to the cytoplasm. The enzyme catalyses Hydrolysis of proteins to small peptides in the presence of ATP and magnesium. alpha-casein is the usual test substrate. In the absence of ATP, only oligopeptides shorter than five residues are hydrolyzed (such as succinyl-Leu-Tyr-|-NHMec, and Leu-Tyr-Leu-|-Tyr-Trp, in which cleavage of the -Tyr-|-Leu- and -Tyr-|-Trp bonds also occurs).. In terms of biological role, cleaves peptides in various proteins in a process that requires ATP hydrolysis. Has a chymotrypsin-like activity. Plays a major role in the degradation of misfolded proteins. The protein is ATP-dependent Clp protease proteolytic subunit 2 of Parasynechococcus marenigrum (strain WH8102).